Reading from the N-terminus, the 101-residue chain is Ubiquitin-related modifier 1 homolog (101 aa).

The residue at position 101 (glycine 101) is a 1-thioglycine. Residue glycine 101 forms a Glycyl lysine isopeptide (Gly-Lys) (interchain with K-? in acceptor proteins) linkage.

It belongs to the URM1 family. In terms of assembly, interacts with cer. Post-translationally, C-terminal thiocarboxylation occurs in 2 steps, it is first acyl-adenylated (-COAMP) via the hesA/moeB/thiF part of the MOCS3 homolog, then thiocarboxylated (-COSH) via the rhodanese domain of the MOCS3 homolog.

The protein resides in the cytoplasm. The protein operates within tRNA modification; 5-methoxycarbonylmethyl-2-thiouridine-tRNA biosynthesis. Functionally, acts as a sulfur carrier required for 2-thiolation of mcm(5)S(2)U at tRNA wobble positions of cytosolic tRNA(Lys), tRNA(Glu) and tRNA(Gln). Serves as sulfur donor in tRNA 2-thiolation reaction by being thiocarboxylated (-COSH) at its C-terminus by MOCS3. The sulfur is then transferred to tRNA to form 2-thiolation of mcm(5)S(2)U. Also acts as a ubiquitin-like protein (UBL) that is covalently conjugated via an isopeptide bond to lysine residues of target proteins such as Prx2/Jafrac1, Ciao1, Eip71CD and GILT1. The thiocarboxylated form serves as substrate for conjugation and oxidative stress specifically induces the formation of UBL-protein conjugates. The protein is Ubiquitin-related modifier 1 homolog of Drosophila yakuba (Fruit fly).